A 328-amino-acid polypeptide reads, in one-letter code: uncharacterized protein (328 aa).

Belongs to the Gfo/Idh/MocA family.

This is an uncharacterized protein from Escherichia coli (strain K12).